Consider the following 632-residue polypeptide: tRNA uridine 5-carboxymethylaminomethyl modification enzyme MnmG (632 aa).

Residues 13–18, valine 125, and serine 180 contribute to the FAD site; that span reads GGGHAG. 273–287 provides a ligand contact to NAD(+); that stretch reads GPRYCPSIEDKVVRF. Glutamine 370 is a binding site for FAD.

It belongs to the MnmG family. Homodimer. Heterotetramer of two MnmE and two MnmG subunits. It depends on FAD as a cofactor.

The protein resides in the cytoplasm. NAD-binding protein involved in the addition of a carboxymethylaminomethyl (cmnm) group at the wobble position (U34) of certain tRNAs, forming tRNA-cmnm(5)s(2)U34. This is tRNA uridine 5-carboxymethylaminomethyl modification enzyme MnmG from Nitrosospira multiformis (strain ATCC 25196 / NCIMB 11849 / C 71).